Consider the following 149-residue polypeptide: Nucleoside diphosphate kinase (149 aa).

ATP is bound by residues K9, F57, R85, T91, R102, and N112. Residue H115 is the Pros-phosphohistidine intermediate of the active site.

Belongs to the NDK family. In terms of assembly, homotetramer. It depends on Mg(2+) as a cofactor.

The protein localises to the cytoplasm. The enzyme catalyses a 2'-deoxyribonucleoside 5'-diphosphate + ATP = a 2'-deoxyribonucleoside 5'-triphosphate + ADP. It carries out the reaction a ribonucleoside 5'-diphosphate + ATP = a ribonucleoside 5'-triphosphate + ADP. Its function is as follows. Major role in the synthesis of nucleoside triphosphates other than ATP. The ATP gamma phosphate is transferred to the NDP beta phosphate via a ping-pong mechanism, using a phosphorylated active-site intermediate. The chain is Nucleoside diphosphate kinase from Cyanothece sp. (strain PCC 7425 / ATCC 29141).